The primary structure comprises 268 residues: Tryptophan synthase alpha chain (268 aa).

Catalysis depends on proton acceptor residues Glu49 and Asp60.

This sequence belongs to the TrpA family. As to quaternary structure, tetramer of two alpha and two beta chains.

The catalysed reaction is (1S,2R)-1-C-(indol-3-yl)glycerol 3-phosphate + L-serine = D-glyceraldehyde 3-phosphate + L-tryptophan + H2O. Its pathway is amino-acid biosynthesis; L-tryptophan biosynthesis; L-tryptophan from chorismate: step 5/5. In terms of biological role, the alpha subunit is responsible for the aldol cleavage of indoleglycerol phosphate to indole and glyceraldehyde 3-phosphate. The sequence is that of Tryptophan synthase alpha chain from Pseudomonas aeruginosa (strain LESB58).